We begin with the raw amino-acid sequence, 284 residues long: 2-dehydro-3-deoxyphosphooctonate aldolase (284 aa).

It belongs to the KdsA family.

It localises to the cytoplasm. The enzyme catalyses D-arabinose 5-phosphate + phosphoenolpyruvate + H2O = 3-deoxy-alpha-D-manno-2-octulosonate-8-phosphate + phosphate. The protein operates within carbohydrate biosynthesis; 3-deoxy-D-manno-octulosonate biosynthesis; 3-deoxy-D-manno-octulosonate from D-ribulose 5-phosphate: step 2/3. It functions in the pathway bacterial outer membrane biogenesis; lipopolysaccharide biosynthesis. The sequence is that of 2-dehydro-3-deoxyphosphooctonate aldolase from Salmonella arizonae (strain ATCC BAA-731 / CDC346-86 / RSK2980).